A 142-amino-acid chain; its full sequence is MAVERTLSIIKPDAVAKNVIGEIYSRFEKAGLRIVAAKMLHLSQEQAEGFYAEHKERGFFPDLVAFMTSGPVVVQALEGENAIALNRQLMGATNPKEAEPGTIRADFASSIDANAVHGSDSAASAEREVAYFFSENEICPRS.

ATP contacts are provided by Lys-11, Phe-59, Arg-87, Thr-93, Arg-104, and Asn-114. Catalysis depends on His-117, which acts as the Pros-phosphohistidine intermediate.

This sequence belongs to the NDK family. Homotetramer. Requires Mg(2+) as cofactor.

It is found in the cytoplasm. It carries out the reaction a 2'-deoxyribonucleoside 5'-diphosphate + ATP = a 2'-deoxyribonucleoside 5'-triphosphate + ADP. It catalyses the reaction a ribonucleoside 5'-diphosphate + ATP = a ribonucleoside 5'-triphosphate + ADP. Functionally, major role in the synthesis of nucleoside triphosphates other than ATP. The ATP gamma phosphate is transferred to the NDP beta phosphate via a ping-pong mechanism, using a phosphorylated active-site intermediate. In Hahella chejuensis (strain KCTC 2396), this protein is Nucleoside diphosphate kinase.